The primary structure comprises 391 residues: ATP phosphoribosyltransferase regulatory subunit (391 aa).

Belongs to the class-II aminoacyl-tRNA synthetase family. HisZ subfamily. Heteromultimer composed of HisG and HisZ subunits.

It is found in the cytoplasm. It functions in the pathway amino-acid biosynthesis; L-histidine biosynthesis; L-histidine from 5-phospho-alpha-D-ribose 1-diphosphate: step 1/9. Its function is as follows. Required for the first step of histidine biosynthesis. May allow the feedback regulation of ATP phosphoribosyltransferase activity by histidine. This is ATP phosphoribosyltransferase regulatory subunit from Nitrosomonas europaea (strain ATCC 19718 / CIP 103999 / KCTC 2705 / NBRC 14298).